The primary structure comprises 302 residues: Ribosomal protein L11 methyltransferase (302 aa).

Thr155, Gly176, Asp198, and Asn239 together coordinate S-adenosyl-L-methionine.

Belongs to the methyltransferase superfamily. PrmA family.

The protein resides in the cytoplasm. The enzyme catalyses L-lysyl-[protein] + 3 S-adenosyl-L-methionine = N(6),N(6),N(6)-trimethyl-L-lysyl-[protein] + 3 S-adenosyl-L-homocysteine + 3 H(+). Functionally, methylates ribosomal protein L11. In Caldicellulosiruptor saccharolyticus (strain ATCC 43494 / DSM 8903 / Tp8T 6331), this protein is Ribosomal protein L11 methyltransferase.